We begin with the raw amino-acid sequence, 756 residues long: 1-phosphatidylinositol 4,5-bisphosphate phosphodiesterase delta-1 (756 aa).

The PH domain occupies 21-130; it reads ALLKGSQLLK…WVLGLHKIIH (110 aa). The tract at residues 30–57 is substrate binding; it reads KVKSSSWRRERFYKLQEDCKTIWQESRK. 2 consecutive EF-hand domains span residues 140-175 and 176-211; these read KLQH…LNIQ and VDDS…LTQR. 10 residues coordinate Ca(2+): aspartate 153, asparagine 155, aspartate 157, lysine 159, glutamate 164, aspartate 189, serine 191, threonine 193, serine 195, and glutamate 200. Serine 191 is a glycosylation site (O-linked (GlcNAc) serine). Residue threonine 193 is glycosylated (O-linked (GlcNAc) threonine). Positions 296–440 constitute a PI-PLC X-box domain; it reads QDMGQPLSHY…LKGKILLKGK (145 aa). Residue histidine 311 is part of the active site. Ca(2+)-binding residues include asparagine 312, glutamate 341, and aspartate 343. Histidine 356 is an active-site residue. Position 390 (glutamate 390) interacts with Ca(2+). 2 residues coordinate substrate: lysine 438 and lysine 440. Threonine 457 carries the phosphothreonine modification. The residue at position 460 (serine 460) is a Phosphoserine. One can recognise a PI-PLC Y-box domain in the interval 492 to 609; sequence LSDMVIYCKS…GYVLKPAFLR (118 aa). The substrate site is built by serine 522 and arginine 549. The 127-residue stretch at 611–737 folds into the C2 domain; sequence PNGTFNPRAL…QGYRHVHLMS (127 aa). Isoleucine 651, aspartate 653, asparagine 677, aspartate 706, tyrosine 707, and aspartate 708 together coordinate Ca(2+).

Interacts with TGM2. The cofactor is Ca(2+). As to expression, strongly expressed in lung, liver and heart. Also expressed at least in pancreas, kidney, skeletal muscle, placenta and brain.

It carries out the reaction a 1,2-diacyl-sn-glycero-3-phospho-(1D-myo-inositol-4,5-bisphosphate) + H2O = 1D-myo-inositol 1,4,5-trisphosphate + a 1,2-diacyl-sn-glycerol + H(+). The enzyme catalyses a 1,2-diacyl-sn-glycero-3-phospho-(1D-myo-inositol) + H2O = 1D-myo-inositol 1-phosphate + a 1,2-diacyl-sn-glycerol + H(+). Functionally, the production of the second messenger molecules diacylglycerol (DAG) and inositol 1,4,5-trisphosphate (IP3) is mediated by activated phosphatidylinositol-specific phospholipase C enzymes. Essential for trophoblast and placental development. Binds phosphatidylinositol 4,5-bisphosphate. The chain is 1-phosphatidylinositol 4,5-bisphosphate phosphodiesterase delta-1 from Homo sapiens (Human).